Consider the following 138-residue polypeptide: uncharacterized protein (138 aa).

A run of 2 helical transmembrane segments spans residues Met-1–Val-21 and Tyr-46–Val-66.

It localises to the cell membrane. This is an uncharacterized protein from Methanocaldococcus jannaschii (strain ATCC 43067 / DSM 2661 / JAL-1 / JCM 10045 / NBRC 100440) (Methanococcus jannaschii).